The following is a 290-amino-acid chain: Beta-lactamase OXY-2 (290 aa).

Residues 1 to 27 (MIKSSWRKIAMLAAAVPLLLASGALWA) form the signal peptide. Serine 72 (acyl-ester intermediate) is an active-site residue. Residue 236–238 (KTG) coordinates substrate.

It belongs to the class-A beta-lactamase family.

It catalyses the reaction a beta-lactam + H2O = a substituted beta-amino acid. Its function is as follows. Hydrolyzes broad-spectrum beta-lactam antibiotics. Active against all third-generation cephalosporins but ceftazidime. The sequence is that of Beta-lactamase OXY-2 (bla) from Klebsiella oxytoca.